Consider the following 160-residue polypeptide: S-adenosylmethionine decarboxylase proenzyme (160 aa).

Ser73 serves as the catalytic Schiff-base intermediate with substrate; via pyruvic acid. The residue at position 73 (Ser73) is a Pyruvic acid (Ser); by autocatalysis. His78 acts as the Proton acceptor; for processing activity in catalysis. The active-site Proton donor; for catalytic activity is Cys93.

This sequence belongs to the prokaryotic AdoMetDC family. Type 1 subfamily. In terms of assembly, heterotetramer of two alpha and two beta chains arranged as a dimer of alpha/beta heterodimers. Pyruvate serves as cofactor. In terms of processing, is synthesized initially as an inactive proenzyme. Formation of the active enzyme involves a self-maturation process in which the active site pyruvoyl group is generated from an internal serine residue via an autocatalytic post-translational modification. Two non-identical subunits are generated from the proenzyme in this reaction, and the pyruvate is formed at the N-terminus of the alpha chain, which is derived from the carboxyl end of the proenzyme. The post-translation cleavage follows an unusual pathway, termed non-hydrolytic serinolysis, in which the side chain hydroxyl group of the serine supplies its oxygen atom to form the C-terminus of the beta chain, while the remainder of the serine residue undergoes an oxidative deamination to produce ammonia and the pyruvoyl group blocking the N-terminus of the alpha chain.

The enzyme catalyses S-adenosyl-L-methionine + H(+) = S-adenosyl 3-(methylsulfanyl)propylamine + CO2. It participates in amine and polyamine biosynthesis; S-adenosylmethioninamine biosynthesis; S-adenosylmethioninamine from S-adenosyl-L-methionine: step 1/1. Functionally, catalyzes the decarboxylation of S-adenosylmethionine to S-adenosylmethioninamine (dcAdoMet), the propylamine donor required for the synthesis of the polyamines spermine and spermidine from the diamine putrescine. The sequence is that of S-adenosylmethionine decarboxylase proenzyme from Pseudomonas aeruginosa (strain LESB58).